Reading from the N-terminus, the 196-residue chain is Holliday junction branch migration complex subunit RuvA (196 aa).

The domain I stretch occupies residues 1-63; that stretch reads MYDYIKGTLV…DDAHLLFGFH (63 aa). The domain II stretch occupies residues 64-142; it reads TEDEKEVFLK…ELPAETTNTT (79 aa). A flexible linker region spans residues 143–146; the sequence is ANQT. The tract at residues 147-196 is domain III; the sequence is AGNQQLDEAMEALLALGYKATELKKVKAFFEDTNETAEQYIKSALKMLMK.

The protein belongs to the RuvA family. As to quaternary structure, homotetramer. Forms an RuvA(8)-RuvB(12)-Holliday junction (HJ) complex. HJ DNA is sandwiched between 2 RuvA tetramers; dsDNA enters through RuvA and exits via RuvB. An RuvB hexamer assembles on each DNA strand where it exits the tetramer. Each RuvB hexamer is contacted by two RuvA subunits (via domain III) on 2 adjacent RuvB subunits; this complex drives branch migration. In the full resolvosome a probable DNA-RuvA(4)-RuvB(12)-RuvC(2) complex forms which resolves the HJ.

Its subcellular location is the cytoplasm. The RuvA-RuvB-RuvC complex processes Holliday junction (HJ) DNA during genetic recombination and DNA repair, while the RuvA-RuvB complex plays an important role in the rescue of blocked DNA replication forks via replication fork reversal (RFR). RuvA specifically binds to HJ cruciform DNA, conferring on it an open structure. The RuvB hexamer acts as an ATP-dependent pump, pulling dsDNA into and through the RuvAB complex. HJ branch migration allows RuvC to scan DNA until it finds its consensus sequence, where it cleaves and resolves the cruciform DNA. The polypeptide is Holliday junction branch migration complex subunit RuvA (Streptococcus thermophilus (strain ATCC BAA-491 / LMD-9)).